A 389-amino-acid chain; its full sequence is NADH-quinone oxidoreductase subunit D (389 aa).

Belongs to the complex I 49 kDa subunit family. In terms of assembly, NDH-1 is composed of 14 different subunits. Subunits NuoB, C, D, E, F, and G constitute the peripheral sector of the complex.

The protein localises to the cell inner membrane. The enzyme catalyses a quinone + NADH + 5 H(+)(in) = a quinol + NAD(+) + 4 H(+)(out). In terms of biological role, NDH-1 shuttles electrons from NADH, via FMN and iron-sulfur (Fe-S) centers, to quinones in the respiratory chain. The immediate electron acceptor for the enzyme in this species is believed to be ubiquinone. Couples the redox reaction to proton translocation (for every two electrons transferred, four hydrogen ions are translocated across the cytoplasmic membrane), and thus conserves the redox energy in a proton gradient. The protein is NADH-quinone oxidoreductase subunit D of Citrifermentans bemidjiense (strain ATCC BAA-1014 / DSM 16622 / JCM 12645 / Bem) (Geobacter bemidjiensis).